We begin with the raw amino-acid sequence, 143 residues long: MSDEIARLVADVFELAGLLRRSGEVVAAREGHTQARWQLLSVVSDRALTVPQAARRLGVTRQGVQRVANDLVVCGLAELRHNPDHRTSPLLVLTENGRRVLQAITERAIVVNNRLADAVDPAALQATRDSLRRMIVALKAERP.

Positions 1-27 (MSDEIARLVADVFELAGLLRRSGEVVA) are cleaved as a signal peptide.

This is an uncharacterized protein from Mycobacterium tuberculosis (strain CDC 1551 / Oshkosh).